A 133-amino-acid polypeptide reads, in one-letter code: Nickel-responsive regulator (133 aa).

Ni(2+) is bound by residues H76, H87, H89, and C95.

It belongs to the transcriptional regulatory CopG/NikR family. As to quaternary structure, homotetramer. Requires Ni(2+) as cofactor.

Its function is as follows. Transcriptional repressor of the nikABCDE operon. Is active in the presence of excessive concentrations of intracellular nickel. The sequence is that of Nickel-responsive regulator from Salmonella arizonae (strain ATCC BAA-731 / CDC346-86 / RSK2980).